A 348-amino-acid polypeptide reads, in one-letter code: uncharacterized protein (348 aa).

The protein resides in the virion. This is an uncharacterized protein from Acanthamoeba polyphaga mimivirus (APMV).